The sequence spans 232 residues: Ribonuclease HII (232 aa).

The RNase H type-2 domain maps to 26 to 218 (RILCGVDEAG…VRRALEGMSA (193 aa)). Asp-32, Glu-33, and Asp-127 together coordinate a divalent metal cation.

The protein belongs to the RNase HII family. Mn(2+) is required as a cofactor. The cofactor is Mg(2+).

It localises to the cytoplasm. It carries out the reaction Endonucleolytic cleavage to 5'-phosphomonoester.. Endonuclease that specifically degrades the RNA of RNA-DNA hybrids. This Ralstonia pickettii (strain 12J) protein is Ribonuclease HII.